Consider the following 101-residue polypeptide: MVGLEHYLTVSAALLVIGIFGIFLNRKNVIVILMSIELMLLAVNINLVAFSSFLGDLTGQVFTLFVLTVAAAEAAIGLAILVTFFRNRGTIDVEDVNVMKG.

3 helical membrane passes run 4–24 (LEHYLTVSAALLVIGIFGIFL), 30–50 (IVILMSIELMLLAVNINLVAF), and 65–85 (FVLTVAAAEAAIGLAILVTFF).

This sequence belongs to the complex I subunit 4L family. As to quaternary structure, NDH-1 is composed of 14 different subunits. Subunits NuoA, H, J, K, L, M, N constitute the membrane sector of the complex.

Its subcellular location is the cell inner membrane. It catalyses the reaction a quinone + NADH + 5 H(+)(in) = a quinol + NAD(+) + 4 H(+)(out). In terms of biological role, NDH-1 shuttles electrons from NADH, via FMN and iron-sulfur (Fe-S) centers, to quinones in the respiratory chain. The immediate electron acceptor for the enzyme in this species is believed to be ubiquinone. Couples the redox reaction to proton translocation (for every two electrons transferred, four hydrogen ions are translocated across the cytoplasmic membrane), and thus conserves the redox energy in a proton gradient. In Cereibacter sphaeroides (strain ATCC 17029 / ATH 2.4.9) (Rhodobacter sphaeroides), this protein is NADH-quinone oxidoreductase subunit K.